We begin with the raw amino-acid sequence, 251 residues long: MSPARITDFSPGKPRKALLCIHGAGCSAAIFRVQISKLRVALKNEFEFVYATAPFSSSPGPGVLPVFQGMGPYYTWFQKHHDAVTNTTTPTVGDRVAAVIGPVQKTVQDWSITNPQAPIVGIVAFSEGALVATLLLHQQQMGKLPWFPKMSIAVLICCFYSDEARDYMRAEAQDDDDKLIINVPTLHLHGRQDFALQGSRQMVETHYLPQNADVLEFQGKHNFPNRPSDVQETVKRFQQLYQKVKMSGSFV.

Residues Ser-126, Asp-193, and His-221 each act as charge relay system in the active site.

Belongs to the LovG family.

The enzyme catalyses dihydro-ML-236C-[compactin nonaketide synthase] + H2O = holo-[compactin nonaketide synthase] + dihydro-ML-236C carboxylate + H(+). It participates in polyketide biosynthesis. Functionally, esterase; part of the gene cluster that mediates the biosynthesis of compactin, also known as mevastatin or ML-236B, and which acts as a potent competitive inhibitor of HMG-CoA reductase. Compactin biosynthesis is performed in two stages. The first stage is catalyzed by the nonaketide synthase mlcA, which belongs to type I polyketide synthases and catalyzes the iterative nine-step formation of the polyketide. This PKS stage is completed by the action of dehydrogenase mlcG, which catalyzes the NADPH-dependent reduction of the unsaturated tetra-, penta- and heptaketide intermediates that arise during the mlcA-mediated biosynthesis of the nonaketide chain and leads to dihydro-ML-236C carboxylate. Covalently bound dihydro-ML-236C carboxylate is released from mlcA by the mlcF esterase. Conversion of dihydro-ML-236C carboxylate into ML-236A carboxylate is subsequently performed with the participation of molecular oxygen and P450 monoogygenase mlcC. Finally, mlcH performs the conversion of ML-236A carboxylate to ML-236B/compactin carboxylate through the addition of the side-chain diketide moiety produced by the diketide synthase mlcB. In Penicillium citrinum, this protein is Esterase mlcF.